We begin with the raw amino-acid sequence, 100 residues long: Urease subunit gamma (100 aa).

This sequence belongs to the urease gamma subunit family. In terms of assembly, heterotrimer of UreA (gamma), UreB (beta) and UreC (alpha) subunits. Three heterotrimers associate to form the active enzyme.

It is found in the cytoplasm. It catalyses the reaction urea + 2 H2O + H(+) = hydrogencarbonate + 2 NH4(+). It participates in nitrogen metabolism; urea degradation; CO(2) and NH(3) from urea (urease route): step 1/1. The chain is Urease subunit gamma from Marinobacter nauticus (strain ATCC 700491 / DSM 11845 / VT8) (Marinobacter aquaeolei).